Reading from the N-terminus, the 316-residue chain is Ribosomal RNA small subunit methyltransferase H (316 aa).

Residues 37-39, aspartate 56, phenylalanine 83, aspartate 106, and histidine 113 contribute to the S-adenosyl-L-methionine site; that span reads GGH. The interval 276–316 is disordered; sequence PILPSEEETKENPASRSAKLRVLRKTKSADKKYKKENSKEE. Over residues 302-316 the composition is skewed to basic and acidic residues; sequence KSADKKYKKENSKEE.

Belongs to the methyltransferase superfamily. RsmH family.

Its subcellular location is the cytoplasm. The catalysed reaction is cytidine(1402) in 16S rRNA + S-adenosyl-L-methionine = N(4)-methylcytidine(1402) in 16S rRNA + S-adenosyl-L-homocysteine + H(+). Specifically methylates the N4 position of cytidine in position 1402 (C1402) of 16S rRNA. This Leptospira borgpetersenii serovar Hardjo-bovis (strain JB197) protein is Ribosomal RNA small subunit methyltransferase H.